The primary structure comprises 263 residues: Mediator of RNA polymerase II transcription subunit 6 (263 aa).

Residues Asn159–Val205 are disordered. The segment covering Ser164–Thr200 has biased composition (low complexity).

This sequence belongs to the Mediator complex subunit 6 family. As to quaternary structure, component of the Mediator complex.

It localises to the nucleus. Its function is as follows. Component of the Mediator complex, a coactivator involved in the regulated transcription of nearly all RNA polymerase II-dependent genes. Mediator functions as a bridge to convey information from gene-specific regulatory proteins to the basal RNA polymerase II transcription machinery. Mediator is recruited to promoters by direct interactions with regulatory proteins and serves as a scaffold for the assembly of a functional preinitiation complex with RNA polymerase II and the general transcription factors. The protein is Mediator of RNA polymerase II transcription subunit 6 (MED6) of Candida albicans (strain SC5314 / ATCC MYA-2876) (Yeast).